The sequence spans 684 residues: Protein real-time (684 aa).

Residues 2 to 178 (VQKYESPVRI…FVNELKQEGI (177 aa)) enclose the PRELI/MSF1 domain. The CRAL-TRIO domain occupies 297 to 474 (TPAVVEKYFP…FLGGSCNVID (178 aa)). The GOLD domain occupies 537-684 (HHGLYKAVDL…GFSSNSLQSR (148 aa)).

The protein localises to the mitochondrion. The polypeptide is Protein real-time (Anopheles gambiae (African malaria mosquito)).